Here is a 407-residue protein sequence, read N- to C-terminus: Argininosuccinate synthase (407 aa).

ATP-binding positions include 16 to 24 (AYSGGLDTS) and alanine 44. Residues tyrosine 96 and serine 101 each contribute to the L-citrulline site. Glycine 126 contacts ATP. Residues threonine 128, asparagine 132, and aspartate 133 each coordinate L-aspartate. Residue asparagine 132 participates in L-citrulline binding. Residues arginine 136, serine 185, serine 194, glutamate 270, and tyrosine 282 each contribute to the L-citrulline site.

The protein belongs to the argininosuccinate synthase family. Type 1 subfamily. As to quaternary structure, homotetramer.

It is found in the cytoplasm. The enzyme catalyses L-citrulline + L-aspartate + ATP = 2-(N(omega)-L-arginino)succinate + AMP + diphosphate + H(+). Its pathway is amino-acid biosynthesis; L-arginine biosynthesis; L-arginine from L-ornithine and carbamoyl phosphate: step 2/3. The protein is Argininosuccinate synthase of Shewanella frigidimarina (strain NCIMB 400).